The primary structure comprises 202 residues: MNLVGGYQHHHHHHHHHHMLHEPFLFGPAARCHQERAYFPGWVLNPAEVTPELHGQSPAYGPAEFGSGGAGRLEALSGRLGRRKGVGGPKKERRRTESINSAFAELRECIPNVPADTKLSKIKTLRLATSYIAYLMEVLARDSQPGEPEGFKAELKKADGRENKRKRETQPEVYSQPLAHGEKKLKGRTGWPQQVWALELNP.

The bHLH domain occupies 83-135 (RKGVGGPKKERRRTESINSAFAELRECIPNVPADTKLSKIKTLRLATSYIAYL). The tract at residues 143 to 187 (SQPGEPEGFKAELKKADGRENKRKRETQPEVYSQPLAHGEKKLKG) is disordered. Basic and acidic residues predominate over residues 149 to 162 (EGFKAELKKADGRE).

Efficient DNA binding requires dimerization with another bHLH protein.

The protein localises to the nucleus. The protein resides in the nucleoplasm. It is found in the nucleolus. In terms of biological role, transcription factor. Plays an essential role in cardiac morphogenesis. The chain is Heart- and neural crest derivatives-expressed protein 1 (HAND1) from Gallus gallus (Chicken).